The sequence spans 137 residues: Large ribosomal subunit protein uL16 (137 aa).

The protein belongs to the universal ribosomal protein uL16 family. In terms of assembly, part of the 50S ribosomal subunit.

Functionally, binds 23S rRNA and is also seen to make contacts with the A and possibly P site tRNAs. In Ruegeria sp. (strain TM1040) (Silicibacter sp.), this protein is Large ribosomal subunit protein uL16.